A 229-amino-acid chain; its full sequence is Deoxyribose-phosphate aldolase (229 aa).

Residue aspartate 96 is the Proton donor/acceptor of the active site. The Schiff-base intermediate with acetaldehyde role is filled by lysine 166. Lysine 195 serves as the catalytic Proton donor/acceptor.

The protein belongs to the DeoC/FbaB aldolase family. DeoC type 1 subfamily.

It is found in the cytoplasm. The catalysed reaction is 2-deoxy-D-ribose 5-phosphate = D-glyceraldehyde 3-phosphate + acetaldehyde. It functions in the pathway carbohydrate degradation; 2-deoxy-D-ribose 1-phosphate degradation; D-glyceraldehyde 3-phosphate and acetaldehyde from 2-deoxy-alpha-D-ribose 1-phosphate: step 2/2. Its function is as follows. Catalyzes a reversible aldol reaction between acetaldehyde and D-glyceraldehyde 3-phosphate to generate 2-deoxy-D-ribose 5-phosphate. The sequence is that of Deoxyribose-phosphate aldolase from Micrococcus luteus (strain ATCC 4698 / DSM 20030 / JCM 1464 / CCM 169 / CCUG 5858 / IAM 1056 / NBRC 3333 / NCIMB 9278 / NCTC 2665 / VKM Ac-2230) (Micrococcus lysodeikticus).